A 335-amino-acid polypeptide reads, in one-letter code: UPF0353 protein Mflv_3659 (335 aa).

2 helical membrane-spanning segments follow: residues 18 to 38 (WFFL…VVQL) and 67 to 87 (LPAV…AGPT). A VWFA domain is found at 98-294 (VVMLVIDVSQ…EQLKQVFTNL (197 aa)). Residues 309–329 (VGWLRLGAGVLALAALGALLI) form a helical membrane-spanning segment.

The protein belongs to the UPF0353 family.

It is found in the cell membrane. The sequence is that of UPF0353 protein Mflv_3659 from Mycolicibacterium gilvum (strain PYR-GCK) (Mycobacterium gilvum (strain PYR-GCK)).